The sequence spans 293 residues: Nitrogenase iron protein (293 aa).

10-17 (GKGGIGKS) serves as a coordination point for ATP. Residue Cys-98 participates in [4Fe-4S] cluster binding. Position 101 is an ADP-ribosylarginine; by dinitrogenase reductase ADP-ribosyltransferase (Arg-101). Cys-133 provides a ligand contact to [4Fe-4S] cluster.

It belongs to the NifH/BchL/ChlL family. As to quaternary structure, homodimer. [4Fe-4S] cluster serves as cofactor. The reversible ADP-ribosylation of Arg-101 inactivates the nitrogenase reductase and regulates nitrogenase activity.

It carries out the reaction N2 + 8 reduced [2Fe-2S]-[ferredoxin] + 16 ATP + 16 H2O = H2 + 8 oxidized [2Fe-2S]-[ferredoxin] + 2 NH4(+) + 16 ADP + 16 phosphate + 6 H(+). In terms of biological role, the key enzymatic reactions in nitrogen fixation are catalyzed by the nitrogenase complex, which has 2 components: the iron protein and the molybdenum-iron protein. This is Nitrogenase iron protein from Pectobacterium atrosepticum (strain SCRI 1043 / ATCC BAA-672) (Erwinia carotovora subsp. atroseptica).